The primary structure comprises 641 residues: Serine/threonine-protein kinase pink-1, mitochondrial (641 aa).

The transit peptide at 1 to 74 (MSMKRFGKAA…TRHGRVFRPF (74 aa)) directs the protein to the mitochondrion. The region spanning 137–483 (YEFGEFLGQG…AANALNLSLF (347 aa)) is the Protein kinase domain. ATP-binding positions include 143–151 (LGQGCNAAV) and Lys-199. Asp-338 serves as the catalytic Proton acceptor.

The protein belongs to the protein kinase superfamily. Ser/Thr protein kinase family. Mg(2+) serves as cofactor. Autophosphorylated.

Its subcellular location is the mitochondrion. It catalyses the reaction L-seryl-[protein] + ATP = O-phospho-L-seryl-[protein] + ADP + H(+). The enzyme catalyses L-threonyl-[protein] + ATP = O-phospho-L-threonyl-[protein] + ADP + H(+). In terms of biological role, protects against mitochondrial dysfunction during cellular stress, potentially by phosphorylating mitochondrial proteins. Plays a role in mitophagy. The sequence is that of Serine/threonine-protein kinase pink-1, mitochondrial (pink-1) from Caenorhabditis elegans.